An 89-amino-acid chain; its full sequence is Small ribosomal subunit protein uS14A (89 aa).

Belongs to the universal ribosomal protein uS14 family. As to quaternary structure, part of the 30S ribosomal subunit. Contacts proteins S3 and S10.

In terms of biological role, binds 16S rRNA, required for the assembly of 30S particles and may also be responsible for determining the conformation of the 16S rRNA at the A site. This Bacillus pumilus (strain SAFR-032) protein is Small ribosomal subunit protein uS14A.